Reading from the N-terminus, the 485-residue chain is Noelin (485 aa).

Residues 1–16 (MSVPLLKIGVVLSTMA) form the signal peptide. N-linked (GlcNAc...) asparagine glycosylation is found at asparagine 33, asparagine 103, asparagine 187, asparagine 288, asparagine 307, asparagine 394, asparagine 431, and asparagine 473. Residues 87–225 (RDARTKQLRQ…ERLRACMQKL (139 aa)) adopt a coiled-coil conformation. In terms of domain architecture, Olfactomedin-like spans 226–478 (ACGKLTGISD…QILYNVTLFH (253 aa)). Cysteine 227 and cysteine 409 form a disulfide bridge.

In terms of assembly, homotetramer; disulfide-linked. Dimer of dimers, giving rise to a V-shaped homotretramer. Isoform 1 and isoform 3 interact with RTN4R. Identified in a complex with RTN4R and LINGO1. Peripherally associated with AMPAR complex. AMPAR complex consists of an inner core made of 4 pore-forming GluA/GRIA proteins (GRIA1, GRIA2, GRIA3 and GRIA4) and 4 major auxiliary subunits arranged in a twofold symmetry. One of the two pairs of distinct binding sites is occupied either by CNIH2, CNIH3 or CACNG2, CACNG3. The other harbors CACNG2, CACNG3, CACNG4, CACNG8 or GSG1L. This inner core of AMPAR complex is complemented by outer core constituents binding directly to the GluA/GRIA proteins at sites distinct from the interaction sites of the inner core constituents. Outer core constituents include at least PRRT1, PRRT2, CKAMP44/SHISA9, FRRS1L and NRN1. The proteins of the inner and outer core serve as a platform for other, more peripherally associated AMPAR constituents, including OLFM1. Alone or in combination, these auxiliary subunits control the gating and pharmacology of the AMPAR complex and profoundly impact their biogenesis and protein processing. Interacts with OLFM2.

It localises to the secreted. The protein localises to the synapse. It is found in the endoplasmic reticulum. Its subcellular location is the cell projection. The protein resides in the axon. It localises to the perikaryon. Functionally, contributes to the regulation of axonal growth in the embryonic and adult central nervous system by inhibiting interactions between RTN4R and LINGO1. Inhibits RTN4R-mediated axon growth cone collapse. May play an important role in regulating the production of neural crest cells by the neural tube. May be required for normal responses to olfactory stimuli. This is Noelin (OLFM1) from Homo sapiens (Human).